The primary structure comprises 178 residues: Protein SPEAR1 (178 aa).

2 disordered regions span residues 1–48 (MGST…QRGL) and 139–178 (HFLN…RLSL). Low complexity predominate over residues 14–28 (SSPPSSSPTSSSSSP). The SPL signature appears at 46 to 54 (RGLGVAQLE). Residues 144–167 (DPSSTTRRSKSLGSGIQHSGSSEN) are compositionally biased toward polar residues. The short motif at 170–176 (VDLELRL) is the EAR element.

Interacts with SPL and SPEAR2. In terms of tissue distribution, not detected in leaves.

In terms of biological role, adapter-like transcriptional repressor recruiting TPL/TPR corepressors to inhibit TCP transcription factors. In Arabidopsis thaliana (Mouse-ear cress), this protein is Protein SPEAR1.